A 136-amino-acid chain; its full sequence is Large ribosomal subunit protein bL17 (136 aa).

This sequence belongs to the bacterial ribosomal protein bL17 family. Part of the 50S ribosomal subunit. Contacts protein L32.

The sequence is that of Large ribosomal subunit protein bL17 from Methylobacterium radiotolerans (strain ATCC 27329 / DSM 1819 / JCM 2831 / NBRC 15690 / NCIMB 10815 / 0-1).